A 321-amino-acid polypeptide reads, in one-letter code: CRISPR-associated aCascade subunit Cas7/Csa2 2 (321 aa).

This sequence belongs to the CRISPR-associated protein Cas7/Cst2/DevR family. Subtype I-a/Apern subfamily. In terms of assembly, part of the aCascade ribonucleoprotein complex, minimally composed of Csa2 and Cas5a, which binds crRNA. Other possible components of aCascade in strain P1 are Cas6b (SSO1437) and Csa5 (SSO1443), while SSO1399, Cas5b (SSO1400) and SSO1401 have sometimes been seen weakly associated. Csa2 is probably the major RNA-binding subunit. The Csa2-Cas5a-crRNA complex also binds target DNA homologous to crRNA, probably forming an R-loop. Purified aCascade forms a filament about 6 nm in width.

In terms of biological role, CRISPR (clustered regularly interspaced short palindromic repeat) is an adaptive immune system that provides protection against mobile genetic elements (viruses, transposable elements and conjugative plasmids). CRISPR clusters contain spacers, sequences complementary to antecedent mobile elements, and target invading nucleic acids. CRISPR clusters are transcribed and processed into CRISPR RNA (crRNA). This Saccharolobus solfataricus (strain ATCC 35092 / DSM 1617 / JCM 11322 / P2) (Sulfolobus solfataricus) protein is CRISPR-associated aCascade subunit Cas7/Csa2 2 (csa2b).